A 276-amino-acid polypeptide reads, in one-letter code: Undecaprenyl-diphosphatase (276 aa).

Helical transmembrane passes span 84 to 104, 115 to 135, 188 to 208, 222 to 242, and 250 to 270; these read YRLGWYVIIGTIPICILGLFF, LWVVVTALVVFSGVIALAEYV, FGFLLAIPAVFASGLFSLPDA, QLLVATLIAFVLGLTAVAWLL, and MYWFVGYRVLVGTGMLVLLAT.

Belongs to the UppP family.

Its subcellular location is the cell membrane. It carries out the reaction di-trans,octa-cis-undecaprenyl diphosphate + H2O = di-trans,octa-cis-undecaprenyl phosphate + phosphate + H(+). Catalyzes the dephosphorylation of undecaprenyl diphosphate (UPP). Confers resistance to bacitracin. The chain is Undecaprenyl-diphosphatase from Mycobacterium bovis (strain ATCC BAA-935 / AF2122/97).